Consider the following 282-residue polypeptide: NADPH-dependent 7-cyano-7-deazaguanine reductase (282 aa).

88-90 is a binding site for substrate; that stretch reads IES. 90–91 is a binding site for NADPH; the sequence is SK. The Thioimide intermediate role is filled by C190. D197 serves as the catalytic Proton donor. 229-230 serves as a coordination point for substrate; that stretch reads HE. 258–259 contributes to the NADPH binding site; it reads RG.

It belongs to the GTP cyclohydrolase I family. QueF type 2 subfamily. Homodimer.

The protein resides in the cytoplasm. It catalyses the reaction 7-aminomethyl-7-carbaguanine + 2 NADP(+) = 7-cyano-7-deazaguanine + 2 NADPH + 3 H(+). It functions in the pathway tRNA modification; tRNA-queuosine biosynthesis. Catalyzes the NADPH-dependent reduction of 7-cyano-7-deazaguanine (preQ0) to 7-aminomethyl-7-deazaguanine (preQ1). In Shigella dysenteriae serotype 1 (strain Sd197), this protein is NADPH-dependent 7-cyano-7-deazaguanine reductase.